The primary structure comprises 450 residues: tRNA modification GTPase MnmE (450 aa).

Residues Arg21, Glu80, and Lys119 each contribute to the (6S)-5-formyl-5,6,7,8-tetrahydrofolate site. The TrmE-type G domain maps to 213–373 (GIKVVIIGKP…LEEEIIKSVK (161 aa)). Residue Asn223 coordinates K(+). GTP contacts are provided by residues 223-228 (NVGKST), 242-248 (TDIPGTT), and 267-270 (DTAG). Ser227 is a binding site for Mg(2+). Thr242, Ile244, and Thr247 together coordinate K(+). Thr248 serves as a coordination point for Mg(2+). (6S)-5-formyl-5,6,7,8-tetrahydrofolate is bound at residue Lys450.

It belongs to the TRAFAC class TrmE-Era-EngA-EngB-Septin-like GTPase superfamily. TrmE GTPase family. Homodimer. Heterotetramer of two MnmE and two MnmG subunits. It depends on K(+) as a cofactor.

The protein localises to the cytoplasm. Functionally, exhibits a very high intrinsic GTPase hydrolysis rate. Involved in the addition of a carboxymethylaminomethyl (cmnm) group at the wobble position (U34) of certain tRNAs, forming tRNA-cmnm(5)s(2)U34. The sequence is that of tRNA modification GTPase MnmE from Pseudothermotoga lettingae (strain ATCC BAA-301 / DSM 14385 / NBRC 107922 / TMO) (Thermotoga lettingae).